A 267-amino-acid polypeptide reads, in one-letter code: Regulatory protein VirG (267 aa).

The 115-residue stretch at 29–143 folds into the Response regulatory domain; sequence HVLLVDDDVA…EFLARIRVAL (115 aa). Asp-78 carries the post-translational modification 4-aspartylphosphate. A DNA-binding region (ompR/PhoB-type) is located at residues 155 to 255; that stretch reads RRSFCFTDWT…ARGAGYFFDA (101 aa).

In terms of processing, phosphorylated by wide host range (WHR) VirA protein.

The protein resides in the cytoplasm. VirG is required for the positive regulation of at least two vir loci encoded by the Ti plasmid of A.tumefaciens. This chain is Regulatory protein VirG (virG), found in Rhizobium radiobacter (Agrobacterium tumefaciens).